The following is a 253-amino-acid chain: 5'/3'-nucleotidase SurE (253 aa).

The a divalent metal cation site is built by Asp8, Asp9, Ser39, and Asn92.

Belongs to the SurE nucleotidase family. A divalent metal cation serves as cofactor.

It is found in the cytoplasm. The enzyme catalyses a ribonucleoside 5'-phosphate + H2O = a ribonucleoside + phosphate. It carries out the reaction a ribonucleoside 3'-phosphate + H2O = a ribonucleoside + phosphate. The catalysed reaction is [phosphate](n) + H2O = [phosphate](n-1) + phosphate + H(+). In terms of biological role, nucleotidase with a broad substrate specificity as it can dephosphorylate various ribo- and deoxyribonucleoside 5'-monophosphates and ribonucleoside 3'-monophosphates with highest affinity to 3'-AMP. Also hydrolyzes polyphosphate (exopolyphosphatase activity) with the preference for short-chain-length substrates (P20-25). Might be involved in the regulation of dNTP and NTP pools, and in the turnover of 3'-mononucleotides produced by numerous intracellular RNases (T1, T2, and F) during the degradation of various RNAs. The protein is 5'/3'-nucleotidase SurE of Shigella dysenteriae serotype 1 (strain Sd197).